The sequence spans 1424 residues: DNA-directed RNA polymerase subunit beta' (1424 aa).

The Zn(2+) site is built by C60, C62, C75, and C78. Positions 449, 451, and 453 each coordinate Mg(2+). Residues C783, C857, C864, and C867 each contribute to the Zn(2+) site.

It belongs to the RNA polymerase beta' chain family. The RNAP catalytic core consists of 2 alpha, 1 beta, 1 beta' and 1 omega subunit. When a sigma factor is associated with the core the holoenzyme is formed, which can initiate transcription. Mg(2+) serves as cofactor. The cofactor is Zn(2+).

The enzyme catalyses RNA(n) + a ribonucleoside 5'-triphosphate = RNA(n+1) + diphosphate. DNA-dependent RNA polymerase catalyzes the transcription of DNA into RNA using the four ribonucleoside triphosphates as substrates. The polypeptide is DNA-directed RNA polymerase subunit beta' (Treponema denticola (strain ATCC 35405 / DSM 14222 / CIP 103919 / JCM 8153 / KCTC 15104)).